Reading from the N-terminus, the 253-residue chain is Imidazole glycerol phosphate synthase subunit HisF (253 aa).

Active-site residues include Asp-11 and Asp-130.

The protein belongs to the HisA/HisF family. As to quaternary structure, heterodimer of HisH and HisF.

Its subcellular location is the cytoplasm. It carries out the reaction 5-[(5-phospho-1-deoxy-D-ribulos-1-ylimino)methylamino]-1-(5-phospho-beta-D-ribosyl)imidazole-4-carboxamide + L-glutamine = D-erythro-1-(imidazol-4-yl)glycerol 3-phosphate + 5-amino-1-(5-phospho-beta-D-ribosyl)imidazole-4-carboxamide + L-glutamate + H(+). It functions in the pathway amino-acid biosynthesis; L-histidine biosynthesis; L-histidine from 5-phospho-alpha-D-ribose 1-diphosphate: step 5/9. Its function is as follows. IGPS catalyzes the conversion of PRFAR and glutamine to IGP, AICAR and glutamate. The HisF subunit catalyzes the cyclization activity that produces IGP and AICAR from PRFAR using the ammonia provided by the HisH subunit. In Cereibacter sphaeroides (strain KD131 / KCTC 12085) (Rhodobacter sphaeroides), this protein is Imidazole glycerol phosphate synthase subunit HisF.